A 192-amino-acid polypeptide reads, in one-letter code: MAEPVLVVGLGNPGPQYATTRHNIGFMVADVLADRMGETFKVHKKSGAEVTTGRLAGRPVVLAKPRVYMNESGRQVGPLAKFYSIAPTDVVIIHDELDIDFGRIRLKAGGGVAGHNGLRSVGSALSTNDFQRVRVGIGRPPGQKSGASFVLEPFNSRERPELGTIIEQAADATELLIELGIEPAQNTVHAWS.

Position 17 (tyrosine 17) interacts with tRNA. Catalysis depends on histidine 22, which acts as the Proton acceptor. Residues tyrosine 68, asparagine 70, and asparagine 116 each contribute to the tRNA site.

The protein belongs to the PTH family. Monomer.

The protein localises to the cytoplasm. The enzyme catalyses an N-acyl-L-alpha-aminoacyl-tRNA + H2O = an N-acyl-L-amino acid + a tRNA + H(+). Functionally, hydrolyzes ribosome-free peptidyl-tRNAs (with 1 or more amino acids incorporated), which drop off the ribosome during protein synthesis, or as a result of ribosome stalling. In terms of biological role, catalyzes the release of premature peptidyl moieties from peptidyl-tRNA molecules trapped in stalled 50S ribosomal subunits, and thus maintains levels of free tRNAs and 50S ribosomes. The chain is Peptidyl-tRNA hydrolase from Mycolicibacterium gilvum (strain PYR-GCK) (Mycobacterium gilvum (strain PYR-GCK)).